The chain runs to 358 residues: NADH-quinone oxidoreductase subunit H (358 aa).

8 helical membrane passes run 30–50, 96–116, 129–149, 168–188, 201–221, 265–285, 297–317, and 336–356; these read IAVGVCIVALYAILAIVLIYM, FLYNLAPFMVIIASFLTFACI, VGVFFLLAASSIGVVGILLAG, IISYELSVGMSIMTMVVLMGT, GWFIFKGHIPAVIAFIIYLIA, FIVASVAATIFLGGWMPLHII, IPGFIWFFAKAFFVVFLLMWI, and YLVPISMVNLLLMACCVAFGF.

This sequence belongs to the complex I subunit 1 family. In terms of assembly, NDH-1 is composed of 14 different subunits. Subunits NuoA, H, J, K, L, M, N constitute the membrane sector of the complex.

The protein localises to the cell inner membrane. It catalyses the reaction a quinone + NADH + 5 H(+)(in) = a quinol + NAD(+) + 4 H(+)(out). Its function is as follows. NDH-1 shuttles electrons from NADH, via FMN and iron-sulfur (Fe-S) centers, to quinones in the respiratory chain. The immediate electron acceptor for the enzyme in this species is believed to be ubiquinone. Couples the redox reaction to proton translocation (for every two electrons transferred, four hydrogen ions are translocated across the cytoplasmic membrane), and thus conserves the redox energy in a proton gradient. This subunit may bind ubiquinone. This chain is NADH-quinone oxidoreductase subunit H, found in Bacteroides thetaiotaomicron (strain ATCC 29148 / DSM 2079 / JCM 5827 / CCUG 10774 / NCTC 10582 / VPI-5482 / E50).